Consider the following 199-residue polypeptide: Protein p2 (199 aa).

The protein localises to the host cytoplasm. This chain is Protein p2, found in Avena sativa (Oat).